Consider the following 238-residue polypeptide: Small proline-rich protein 3 (238 aa).

The interval 1–67 (MSSYQQKQPF…CSTKVPEPGN (67 aa)) is disordered. An N-acetylserine modification is found at S2. A run of 21 repeats spans residues 52 to 59 (TKIPEPCS), 60 to 67 (TKVPEPGN), 68 to 75 (TVVLEPDY), 76 to 83 (TTMPGPCS), 84 to 91 (TNITEPDY), 92 to 99 (TTIPGPCS), 100 to 107 (TNITEPDY), 108 to 115 (TTIPGPCS), 116 to 123 (TNIPGPDR), 124 to 131 (TVVPGSCS), 132 to 139 (TNITEPDY), 140 to 147 (TTIPGPSS), 148 to 155 (TKIPDPGC), 156 to 163 (AMVPGPSP), 164 to 175 (SSTSEPSSEPCS), 176 to 183 (INVREPGY), 184 to 191 (MNASEPTH), 192 to 199 (AKVPDQGY), 200 to 207 (TKIPDQGS), 208 to 215 (SKVPEPCQ), and 216 to 223 (SRVPEVCP). Positions 52–223 (TKIPEPCSTK…CQSRVPEVCP (172 aa)) are 21 X 8 AA approximate tandem repeats. Positions 110 to 238 (IPGPCSTNIP…VSAKQKTKQK (129 aa)) are disordered. A compositionally biased stretch (low complexity) spans 163–175 (PSSTSEPSSEPCS).

Belongs to the cornifin (SPRR) family.

It is found in the cytoplasm. Its function is as follows. Cross-linked envelope protein of keratinocytes. In Mus musculus (Mouse), this protein is Small proline-rich protein 3 (Sprr3).